An 849-amino-acid chain; its full sequence is SMY2 homolog 2 (849 aa).

In terms of domain architecture, GYF spans 149 to 205; sequence ESQWKYIDSNGNIQGPFGTNNMSQWYQGGYFTPTLQICRLATSPEPFGVNDRFIRLG. 4 disordered regions span residues 305 to 505, 527 to 547, 593 to 612, and 634 to 661; these read APLS…TTNL, DLKK…QLDR, TKIN…IKPD, and NRAS…NTSN. The span at 308–318 shows a compositional bias: low complexity; sequence STTSSRSNKTT. Over residues 319 to 331 the composition is skewed to basic and acidic residues; it reads SSHEEKVPSHEEA. The residue at position 350 (Thr-350) is a Phosphothreonine. Basic and acidic residues-rich tracts occupy residues 361–375, 387–403, and 425–443; these read TKQE…KEQN, VDRK…KSKD, and LLEE…EEQR. Positions 410 to 484 form a coiled coil; it reads EEQKRFAKAE…EKQKELLNNI (75 aa). The span at 444 to 455 shows a compositional bias: basic residues; the sequence is KLKKEKKLKQKQ. Positions 456–479 are enriched in basic and acidic residues; the sequence is KKEEEKLKKKKKEEGKLEKEKQKE. Positions 483–505 are enriched in polar residues; the sequence is NILTGDTETPSSENTATSITTNL. The span at 594–605 shows a compositional bias: polar residues; sequence KINSQSKINKAN. The segment covering 644 to 661 has biased composition (low complexity); the sequence is SRTPSPSSSALNSSNTSN.

The protein belongs to the SMY2/mpd2 family. As to quaternary structure, interacts with ribosomes. Interacts with EAP1 and MSL5 (via the GYP domain).

Its subcellular location is the cytoplasm. This chain is SMY2 homolog 2 (SYH1), found in Saccharomyces cerevisiae (strain ATCC 204508 / S288c) (Baker's yeast).